Consider the following 589-residue polypeptide: Peptide transporter PTR_A (589 aa).

A disordered region spans residues 1-56 (MSETKPAANDLSNVPSASDSDKDNSLDKVHSLEKTGVHEDINKLPSSDLEQLEDDG). Residues 19–42 (DSDKDNSLDKVHSLEKTGVHEDIN) show a composition bias toward basic and acidic residues. The next 4 membrane-spanning stretches (helical) occupy residues 74 to 95 (IPLS…YYGL), 124 to 144 (ALSY…AWIA), 153 to 173 (AICI…ITSI), and 180 to 200 (NTSL…TGGV). Asn-233 carries an N-linked (GlcNAc...) asparagine glycan. Helical transmembrane passes span 236–256 (IQNV…SVIA), 266–286 (FWAG…VLLL), 345–365 (VYAC…GQMI), 388–408 (INAI…YPFI), 420–440 (IFWG…LQHF), 467–487 (IAIQ…ASIT), 502–522 (SFIM…GIAL), and 533–553 (WTYT…YIIF).

It belongs to the major facilitator superfamily. Proton-dependent oligopeptide transporter (POT/PTR) (TC 2.A.17) family.

Its subcellular location is the cell membrane. It catalyses the reaction a dipeptide(out) + H(+)(out) = a dipeptide(in) + H(+)(in). The catalysed reaction is an L-amino acid tripeptide(out) + H(+)(out) = an L-amino acid tripeptide(in) + H(+)(in). Its function is as follows. Peptide transporter that exploits the inwardly directed proton motive force to facilitate the cellular uptake of di/tripeptides. This is Peptide transporter PTR_A from Candidozyma auris (Yeast).